A 360-amino-acid chain; its full sequence is MWLQLLLLLLAPQGGHGCHGLELDRELVLAKVRALFLDALGPPPVTGEGGDPGVRRLHRRHAVGGFMRRGSEPEDQDVSQAILFPAAGASCGDEPDAGEAEEGLFTYVFQPSQHTRSRQVTSAQLWFHTGLDRQETAAANSSEPLLGLLVLTSGGPMPVPMSLGQAPPRWAVLHLATSAFPLLTHPVLALLLRCPLCSCSTRPEATPFLVAHTRAKPPSGGERARRSTPPLPWPWSPAALRLLQRPPEEPAAHADCHRAALNISFQELGWDRWIVHPPSFIFYYCHGGCGLSPPQDLPLPVPGVPPTPVQPLSLVPGAQPCCAALPGTMRPLHVRTTSDGGYSFKYEMVPNLLTQHCACI.

The first 17 residues, 1–17, serve as a signal peptide directing secretion; the sequence is MWLQLLLLLLAPQGGHG. A propeptide spanning residues 18–60 is cleaved from the precursor; sequence CHGLELDRELVLAKVRALFLDALGPPPVTGEGGDPGVRRLHRR. The propeptide at 61–226 is inhibin alpha N-terminal region; it reads HAVGGFMRRG…PPSGGERARR (166 aa). N140 and N262 each carry an N-linked (GlcNAc...) asparagine glycan. Intrachain disulfides connect C256/C322, C285/C357, and C289/C359.

The protein belongs to the TGF-beta family. Dimeric, linked by one or more disulfide bonds. Activin B is a dimer of alpha and beta-B. Inhibin A is a dimer of alpha and beta-A. Inhibin B is a dimer of alpha and beta-B. Interacts with TGFBR3L; this interaction regulates female fertility. In terms of processing, proteolytic processing yields a number of bioactive forms, consisting either solely of the mature alpha chain, of the most N-terminal propeptide linked through a disulfide bond to the mature alpha chain, or of the entire proprotein.

The protein localises to the secreted. Functionally, inhibins and activins inhibit and activate, respectively, the secretion of follitropin by the pituitary gland. Inhibins/activins are involved in regulating a number of diverse functions such as hypothalamic and pituitary hormone secretion, gonadal hormone secretion, germ cell development and maturation, erythroid differentiation, insulin secretion, nerve cell survival, embryonic axial development or bone growth, depending on their subunit composition. Inhibins appear to oppose the functions of activins. Inhibin A is a dimer of alpha/INHA and beta-A/INHBA that functions as a feedback regulator in the hypothalamic-pituitary-gonadal (HPG) axis. Inhibits the secretion of FSH from the anterior pituitary gland by acting on pituitary gonadotrope cells. Antagonizes activin A by binding to the proteoglycan, betaglycan, and forming a stable complex with and, thereby, sequestering type II activin receptors while excluding type I receptor. In terms of biological role, inhibin B is a dimer of alpha and beta-B that plays a crucial role in the regulation of the reproductive system by inhibiting the secretion of follicle-stimulating hormone (FSH) from the anterior pituitary gland. Thereby, maintains reproductive homeostasis in both males and females. Acts as a more potent suppressor of FSH release than inhibin A. Functions as competitive receptor antagonist binding activin type II receptors with high affinity in the presence of the TGF-beta type III coreceptor/TGFBR3L. This chain is Inhibin alpha chain (INHA), found in Bos taurus (Bovine).